A 157-amino-acid polypeptide reads, in one-letter code: Protein-export protein SecB (157 aa).

This sequence belongs to the SecB family. Homotetramer, a dimer of dimers. One homotetramer interacts with 1 SecA dimer.

Its subcellular location is the cytoplasm. In terms of biological role, one of the proteins required for the normal export of preproteins out of the cell cytoplasm. It is a molecular chaperone that binds to a subset of precursor proteins, maintaining them in a translocation-competent state. It also specifically binds to its receptor SecA. This chain is Protein-export protein SecB, found in Rhodopseudomonas palustris (strain TIE-1).